A 134-amino-acid polypeptide reads, in one-letter code: Snaclec alboaggregin-A subunit alpha' (134 aa).

In terms of domain architecture, C-type lectin spans 1–134; sequence DFHCLPGWSA…NPFVCKFPPQ (134 aa). Cystine bridges form between Cys4–Cys15, Cys32–Cys129, and Cys104–Cys121.

This sequence belongs to the snaclec family. In terms of assembly, heterotetramer of the subunits alpha, alpha', beta and beta'; disulfide-linked. Expressed by the venom gland.

The protein resides in the secreted. Its function is as follows. Potent platelet activator that aggregates platelets via both GPIbalpha (GP1BA) and GPVI (GP6). Induces a tyrosine phosphorylation profile in platelets that resembles this produced by collagen, involving the time dependent tyrosine phosphorylation of Fc receptor gamma chain (FCGR1A), phospholipase Cgamma2 (PLCG2), and LAT. The sequence is that of Snaclec alboaggregin-A subunit alpha' from Trimeresurus albolabris (White-lipped pit viper).